The chain runs to 62 residues: Photosystem II reaction center protein Z (62 aa).

Helical transmembrane passes span 8–28 (TLLA…VLLA) and 41–61 (FSGS…NSFV).

This sequence belongs to the PsbZ family. In terms of assembly, PSII is composed of 1 copy each of membrane proteins PsbA, PsbB, PsbC, PsbD, PsbE, PsbF, PsbH, PsbI, PsbJ, PsbK, PsbL, PsbM, PsbT, PsbY, PsbZ, Psb30/Ycf12, at least 3 peripheral proteins of the oxygen-evolving complex and a large number of cofactors. It forms dimeric complexes.

It localises to the plastid. It is found in the chloroplast thylakoid membrane. Functionally, may control the interaction of photosystem II (PSII) cores with the light-harvesting antenna, regulates electron flow through the 2 photosystem reaction centers. PSII is a light-driven water plastoquinone oxidoreductase, using light energy to abstract electrons from H(2)O, generating a proton gradient subsequently used for ATP formation. The sequence is that of Photosystem II reaction center protein Z from Ostreococcus tauri.